The primary structure comprises 103 residues: Large ribosomal subunit protein bL21 (103 aa).

The protein belongs to the bacterial ribosomal protein bL21 family. As to quaternary structure, part of the 50S ribosomal subunit. Contacts protein L20.

In terms of biological role, this protein binds to 23S rRNA in the presence of protein L20. This Laribacter hongkongensis (strain HLHK9) protein is Large ribosomal subunit protein bL21.